A 227-amino-acid chain; its full sequence is Cytochrome c oxidase subunit 2 (227 aa).

Residues 1–14 (MAYPFELGFQDATS) are Mitochondrial intermembrane-facing. The chain crosses the membrane as a helical span at residues 15–45 (PIMEELLHFHDHTLMIVFLISSLVLYIISLM). Residues 46–59 (LTTKLTHTSTMDAQ) are Mitochondrial matrix-facing. A helical transmembrane segment spans residues 60–87 (EVETIWTILPAIILILIALPSLRILYMM). The Mitochondrial intermembrane segment spans residues 88–227 (DEINDPSLTV…HFENWSSSML (140 aa)). Residues H161, C196, E198, C200, H204, and M207 each contribute to the Cu cation site. E198 lines the Mg(2+) pocket.

It belongs to the cytochrome c oxidase subunit 2 family. Component of the cytochrome c oxidase (complex IV, CIV), a multisubunit enzyme composed of 14 subunits. The complex is composed of a catalytic core of 3 subunits MT-CO1, MT-CO2 and MT-CO3, encoded in the mitochondrial DNA, and 11 supernumerary subunits COX4I, COX5A, COX5B, COX6A, COX6B, COX6C, COX7A, COX7B, COX7C, COX8 and NDUFA4, which are encoded in the nuclear genome. The complex exists as a monomer or a dimer and forms supercomplexes (SCs) in the inner mitochondrial membrane with NADH-ubiquinone oxidoreductase (complex I, CI) and ubiquinol-cytochrome c oxidoreductase (cytochrome b-c1 complex, complex III, CIII), resulting in different assemblies (supercomplex SCI(1)III(2)IV(1) and megacomplex MCI(2)III(2)IV(2)). Found in a complex with TMEM177, COA6, COX18, COX20, SCO1 and SCO2. Interacts with TMEM177 in a COX20-dependent manner. Interacts with COX20. Interacts with COX16. It depends on Cu cation as a cofactor.

It localises to the mitochondrion inner membrane. It catalyses the reaction 4 Fe(II)-[cytochrome c] + O2 + 8 H(+)(in) = 4 Fe(III)-[cytochrome c] + 2 H2O + 4 H(+)(out). Functionally, component of the cytochrome c oxidase, the last enzyme in the mitochondrial electron transport chain which drives oxidative phosphorylation. The respiratory chain contains 3 multisubunit complexes succinate dehydrogenase (complex II, CII), ubiquinol-cytochrome c oxidoreductase (cytochrome b-c1 complex, complex III, CIII) and cytochrome c oxidase (complex IV, CIV), that cooperate to transfer electrons derived from NADH and succinate to molecular oxygen, creating an electrochemical gradient over the inner membrane that drives transmembrane transport and the ATP synthase. Cytochrome c oxidase is the component of the respiratory chain that catalyzes the reduction of oxygen to water. Electrons originating from reduced cytochrome c in the intermembrane space (IMS) are transferred via the dinuclear copper A center (CU(A)) of subunit 2 and heme A of subunit 1 to the active site in subunit 1, a binuclear center (BNC) formed by heme A3 and copper B (CU(B)). The BNC reduces molecular oxygen to 2 water molecules using 4 electrons from cytochrome c in the IMS and 4 protons from the mitochondrial matrix. The chain is Cytochrome c oxidase subunit 2 (MT-CO2) from Neotamias bulleri (Buller's chipmunk).